The sequence spans 338 residues: MKKEFDFILIGRITIDFNPTDYYNNLENSSLFKKYIGGSAANIAIGLSRLKNKVGFFGSVSDDQFGNFVLNVFENEKIDISHIKKTKDHKLGLTFTEMLSEEKSTILMYRDNVADLQIDVSDIDLDYILRTKILVISGTSLAKSPSREAVLKALFLAKNNGIKVVFDIDYRPYSWKNLDEVSLYYQIVAQNSDLIIGSYEEIQLTSRFCLENPENLIDDDYAKYWLKFVDLIIIKNGKKGSKLYQKDKKLVAKIVPVKMLKGYGGGDAYASLFLDHYLKNESDLENGLALATSAASIMVQSHSSFDLPDYQKILEFKDNALKSDPDLVQKKEWNAFKK.

Belongs to the carbohydrate kinase PfkB family.

The enzyme catalyses 5-dehydro-2-deoxy-D-gluconate + ATP = 6-phospho-5-dehydro-2-deoxy-D-gluconate + ADP + H(+). It participates in polyol metabolism; myo-inositol degradation into acetyl-CoA; acetyl-CoA from myo-inositol: step 5/7. Its function is as follows. Catalyzes the phosphorylation of 5-dehydro-2-deoxy-D-gluconate (2-deoxy-5-keto-D-gluconate or DKG) to 6-phospho-5-dehydro-2-deoxy-D-gluconate (DKGP). This Mesomycoplasma hyopneumoniae (strain 7448) (Mycoplasma hyopneumoniae) protein is 5-dehydro-2-deoxygluconokinase.